We begin with the raw amino-acid sequence, 289 residues long: O-methyltransferase asqN (289 aa).

D155 contacts S-adenosyl-L-methionine. H195 serves as the catalytic Proton acceptor.

Belongs to the class I-like SAM-binding methyltransferase superfamily. Cation-independent O-methyltransferase family.

Its pathway is secondary metabolite biosynthesis. The protein operates within alkaloid biosynthesis. It functions in the pathway mycotoxin biosynthesis. In terms of biological role, O-methyltransferase; part of the gene cluster that mediates the biosynthesis of the aspoquinolone mycotoxins. The role of asqN within the aspoquinolone pathway has still to be determined. The first step of the pathway is catalyzed by the nonribosomal peptide synthetase asqK that condenses anthranilic acid and O-methyl-L-tyrosine to produce 4'-methoxycyclopeptin. 4'-methoxycyclopeptin is then converted to 4'-methoxydehydrocyclopeptin by the ketoglutarate-dependent dioxygenase asqJ. AsqJ also converts its first product 4'-methoxydehydrocyclopeptin to 4'-methoxycyclopenin. The following conversion of 4'-methoxycyclopenin into 4'-methoxyviridicatin is catalyzed by the cyclopenase asqI. 4'-methoxyviridicatin is the precursor of quinolone natural products, and is further converted to quinolinone B. The prenyltransferase asqH1 then catalyzes the canonical Friedel-Crafts alkylation of quinolinone B with dimethylallyl cation to yield dimethylallyl quinolone, which is subjected to FAD-dependent dehydrogenation by the FAD-linked oxidoreductase asqF to yield conjugated aryl diene. The delta(3') double bond then serves as the site of the second alkylation with DMAPP catalyzed by the prenyltransferase asqH2 to yield a carbenium ion intermediate, which can be attacked by H(2)O to yield a styrenyl quinolone containing a C3'-hydroxyprenyl chain. The FAD-dependent monooxygenase asqG performs epoxidation of the terminal C7'-C8' olefin. Finally, after dehydratation of the epoxide at C3 by asqC, the quinolone epoxide rearrangement protein asqO catalyzes an enzymatic 3-exo-tet cyclization to yield the cyclopropyl-THF ring system in aspoquinolone. This is O-methyltransferase asqN from Emericella nidulans (strain FGSC A4 / ATCC 38163 / CBS 112.46 / NRRL 194 / M139) (Aspergillus nidulans).